We begin with the raw amino-acid sequence, 290 residues long: Probable branched-chain-amino-acid aminotransferase (290 aa).

N6-(pyridoxal phosphate)lysine is present on Lys-155.

This sequence belongs to the class-IV pyridoxal-phosphate-dependent aminotransferase family. The cofactor is pyridoxal 5'-phosphate.

The catalysed reaction is L-leucine + 2-oxoglutarate = 4-methyl-2-oxopentanoate + L-glutamate. The enzyme catalyses L-isoleucine + 2-oxoglutarate = (S)-3-methyl-2-oxopentanoate + L-glutamate. It catalyses the reaction L-valine + 2-oxoglutarate = 3-methyl-2-oxobutanoate + L-glutamate. It participates in amino-acid biosynthesis; L-isoleucine biosynthesis; L-isoleucine from 2-oxobutanoate: step 4/4. The protein operates within amino-acid biosynthesis; L-leucine biosynthesis; L-leucine from 3-methyl-2-oxobutanoate: step 4/4. It functions in the pathway amino-acid biosynthesis; L-valine biosynthesis; L-valine from pyruvate: step 4/4. Functionally, acts on leucine, isoleucine and valine. This Rickettsia felis (strain ATCC VR-1525 / URRWXCal2) (Rickettsia azadi) protein is Probable branched-chain-amino-acid aminotransferase (ilvE).